The sequence spans 57 residues: Mambalgin-3 (57 aa).

4 disulfides stabilise this stretch: cysteine 3–cysteine 19, cysteine 12–cysteine 37, cysteine 41–cysteine 49, and cysteine 50–cysteine 55.

Belongs to the three-finger toxin family. Short-chain subfamily. Mambalgin sub-subfamily. In terms of tissue distribution, expressed by the venom gland.

It is found in the secreted. In terms of biological role, this three-finger toxin inhibits ASIC channels. It acts as a gating modifier toxin by decreasing the apparent proton sensitivity of activation and by slightly increasing the apparent proton sensitivity for inactivation. It binds more tightly to the closed state and to a much lesser extent the inactivated/desensitized state of ASIC1a. It interacts directly with the outside surface of the thumb domain of chicken ASIC1a (ASIC1a), but does not insert into the acidic pocket as suggested previously. This binding leads to relocation of the thumb domain that could disrupt the acidic pocket of cASIC1a. The peptide exerts both stimulatory and inhibitory effects on ASIC1a. It reversibly inhibits rASIC1a (IC(50)=17 nM), rASIC1b (IC(50)= 44 nM) and rASIC1a-rASIC2a (IC(50)=252 nM) channels. In vivo, it shows a potent naloxone-resistant analgesic effect against acute and inflammatory pain upon central and peripheral injection. In addition, it also has an opioid-independent effect on both thermal and mechanical inflammatory pain after systemic administration and is effective against neuropathic pain. This chain is Mambalgin-3, found in Dendroaspis angusticeps (Eastern green mamba).